A 149-amino-acid chain; its full sequence is 5-hydroxytryptamine receptor 1E (149 aa).

The Extracellular segment spans residues 1–6 (HQPANY). The chain crosses the membrane as a helical span at residues 7–31 (LICSLAVTDLLVAVLVMPLSIMYIV). Residues 32 to 39 (MDSWRLGY) are Cytoplasmic-facing. The helical transmembrane segment at 40 to 65 (FICEVWLSVDMTCCTCSILHLCVIAL) threads the bilayer. A disulfide bond links cysteine 42 and cysteine 120. Residues aspartate 49 and cysteine 53 each contribute to the serotonin site. The DRY motif; important for ligand-induced conformation changes motif lies at 66 to 68 (DRY). Topologically, residues 66 to 85 (DRYWAITNAIEYARKRTAKR) are extracellular. Residues 86–104 (AGLMILTVWTISIFISMPP) form a helical membrane-spanning segment. The Cytoplasmic segment spans residues 105 to 149 (LFWRSHRQLSPPPSQCAIQHDHVIYTIYSTLGAFYIPLTLILILY).

Belongs to the G-protein coupled receptor 1 family.

The protein resides in the cell membrane. Functionally, G-protein coupled receptor for 5-hydroxytryptamine (serotonin). Also functions as a receptor for various alkaloids and psychoactive substances. Ligand binding causes a conformation change that triggers signaling via guanine nucleotide-binding proteins (G proteins) and modulates the activity of downstream effectors, such as adenylate cyclase. HTR1E is coupled to G(i)/G(o) G alpha proteins and mediates inhibitory neurotransmission by inhibiting adenylate cyclase activity. This Sus scrofa (Pig) protein is 5-hydroxytryptamine receptor 1E (HTR1E).